Reading from the N-terminus, the 289-residue chain is Mas-related G-protein coupled receptor member G (289 aa).

Residues 1–13 (MLSIFNIWGTFNR) are Extracellular-facing. The chain crosses the membrane as a helical span at residues 14 to 34 (VLFFLSLTVSLAGLAGNTLLL). Topologically, residues 35–49 (WHLGLRIKKGPFNTY) are cytoplasmic. The chain crosses the membrane as a helical span at residues 50 to 70 (LLHLAAADFLFLSCQVGFSIA). Residues 71–80 (KIASGYEDTL) lie on the Extracellular side of the membrane. Residues 81 to 101 (YFPVTFLWFAVGLWLLAAFIV) form a helical membrane-spanning segment. Residues 102–123 (DCCLSYMFPSFCGPNCRPRYTS) lie on the Cytoplasmic side of the membrane. The chain crosses the membrane as a helical span at residues 124–144 (FVLCLVIWALTMLAVLLPANA). Residues 145 to 164 (CGLLYNRMSLLVCLKYHWVS) lie on the Extracellular side of the membrane. A helical transmembrane segment spans residues 165-185 (VVWLGVLASTACGASMFLLVF). Over 186 to 200 (GNCCSSQPPSKFCKL) the chain is Cytoplasmic. A helical membrane pass occupies residues 201–221 (AQCSGILLFFCRLPLVFYWCL). Position 222 (R222) is a topological domain, extracellular. A helical membrane pass occupies residues 223-243 (PVIKFLLPFFFPLATLLACID). At 244–289 (SSAKPLLYYLKGRQLRKEPLQVALNRALGEESQSSSGGISLPMSRV) the chain is on the cytoplasmic side.

The protein belongs to the G-protein coupled receptor 1 family. Mas subfamily.

Its subcellular location is the cell membrane. In terms of biological role, orphan receptor. May regulate nociceptor function and/or development, including the sensation or modulation of pain. This is Mas-related G-protein coupled receptor member G (Mrgprg) from Rattus norvegicus (Rat).